The sequence spans 229 residues: Potassium/proton antiporter CemA (229 aa).

A run of 3 helical transmembrane segments spans residues 6-26 (AFIPFFYFTSIVFLPWVISLC), 107-127 (ILHFSTNLISFVILSGYSFWG), and 189-209 (ILSGLVSTFPVILDTIFKYWI).

Belongs to the CemA family.

It is found in the plastid. It localises to the chloroplast inner membrane. The catalysed reaction is K(+)(in) + H(+)(out) = K(+)(out) + H(+)(in). Its function is as follows. Contributes to K(+)/H(+) antiport activity by supporting proton efflux to control proton extrusion and homeostasis in chloroplasts in a light-dependent manner to modulate photosynthesis. Prevents excessive induction of non-photochemical quenching (NPQ) under continuous-light conditions. Indirectly promotes efficient inorganic carbon uptake into chloroplasts. This is Potassium/proton antiporter CemA from Draba nemorosa (Woodland whitlowgrass).